The sequence spans 782 residues: Translation initiation factor IF-2 (782 aa).

Positions 1 to 14 (MSKNIDDKNEDGKK) are enriched in basic and acidic residues. Disordered stretches follow at residues 1-106 (MSKN…KKTY) and 132-174 (SIVS…AETE). A compositionally biased stretch (basic residues) spans 15–25 (IKIIKLRKKVV). The segment covering 31–43 (NDLSGKNNPSGST) has biased composition (polar residues). A compositionally biased stretch (basic and acidic residues) spans 44–61 (DLHKHNNKVEYSHSRDGR). Polar residues-rich tracts occupy residues 86-106 (GYSQ…KKTY) and 133-142 (IVSSASSTDS). A compositionally biased stretch (basic and acidic residues) spans 143-159 (ENSKELNRKLGEKKKQQ). The tr-type G domain maps to 280–453 (EKPPVITIMG…DMMLLKANPS (174 aa)). Residues 289-296 (GHVDHGKT) form a G1 region. 289–296 (GHVDHGKT) serves as a coordination point for GTP. Positions 314–318 (GITQH) are G2. The tract at residues 335 to 338 (DTPG) is G3. GTP contacts are provided by residues 335 to 339 (DTPGH) and 389 to 392 (NKID). The G4 stretch occupies residues 389-392 (NKID). A G5 region spans residues 425–427 (SAL).

It belongs to the TRAFAC class translation factor GTPase superfamily. Classic translation factor GTPase family. IF-2 subfamily.

It is found in the cytoplasm. Functionally, one of the essential components for the initiation of protein synthesis. Protects formylmethionyl-tRNA from spontaneous hydrolysis and promotes its binding to the 30S ribosomal subunits. Also involved in the hydrolysis of GTP during the formation of the 70S ribosomal complex. In Borreliella afzelii (strain PKo) (Borrelia afzelii), this protein is Translation initiation factor IF-2.